The following is a 1084-amino-acid chain: Cellulose synthase A catalytic subunit 2 [UDP-forming] (1084 aa).

M1 is subject to N-acetylmethionine. The Cytoplasmic segment spans residues M1–M278. Zn(2+) contacts are provided by C39, C42, C58, C61, C66, C69, C81, and C84. Residues C39–K85 form an RING-type; degenerate zinc finger. Residues I230 to R259 form a disordered region. Residues L279–V299 traverse the membrane as a helical segment. Residues N300–D301 are Extracellular-facing. A helical membrane pass occupies residues A302–L322. Residues D323 to S867 lie on the Cytoplasmic side of the membrane. Residues S361, K367, E368, and D397 each contribute to the UDP-alpha-D-glucose site. D397 is a catalytic residue. The stretch at V451–K477 forms a coiled coil. K538 is a UDP-alpha-D-glucose binding site. Mn(2+)-binding residues include K539 and D563. D784 is an active-site residue. The chain crosses the membrane as a helical span at residues L868 to V888. Residues P889 to N893 are Extracellular-facing. A helical transmembrane segment spans residues Y894–M914. The Cytoplasmic segment spans residues Q915–Q929. Residues F930–V950 traverse the membrane as a helical segment. The Extracellular portion of the chain corresponds to L951–T979. An N-linked (GlcNAc...) asparagine glycan is attached at N957. The helical transmembrane segment at T980 to V1000 threads the bilayer. Residues S1001–W1011 are Cytoplasmic-facing. The chain crosses the membrane as a helical span at residues G1012–L1032. The Extracellular segment spans residues K1033–K1041. The helical transmembrane segment at M1042–V1062 threads the bilayer. Topologically, residues R1063 to N1084 are cytoplasmic.

Belongs to the glycosyltransferase 2 family. Plant cellulose synthase subfamily. Homodimer. Interaction through zinc finger domain. Requires Mn(2+) as cofactor. Zn(2+) is required as a cofactor. As to expression, strongly and ubiquitously expressed. Localized in some dividing and expanding cells, as well as in vascular tissues.

Its subcellular location is the cell membrane. It carries out the reaction [(1-&gt;4)-beta-D-glucosyl](n) + UDP-alpha-D-glucose = [(1-&gt;4)-beta-D-glucosyl](n+1) + UDP + H(+). The protein operates within glycan metabolism; plant cellulose biosynthesis. Its function is as follows. Catalytic subunit of cellulose synthase terminal complexes ('rosettes'), required for beta-1,4-glucan microfibril crystallization, a major mechanism of the cell wall formation. Involved in the primary cell wall formation. The polypeptide is Cellulose synthase A catalytic subunit 2 [UDP-forming] (Arabidopsis thaliana (Mouse-ear cress)).